Reading from the N-terminus, the 144-residue chain is Small polypeptide DEVIL 18 (144 aa).

The segment covering Ser30–Ser58 has biased composition (low complexity). The interval Ser30–Asp89 is disordered. Residues Pro42–Ser58 form a helical membrane-spanning segment. Residues Ala68–Thr84 are compositionally biased toward polar residues. The segment at Ser108–Lys139 is required for DVL/RTFL small polypeptide activity.

The protein belongs to the DVL/RTFL small polypeptides family.

Its subcellular location is the cell membrane. Its function is as follows. Small polypeptide acting as a regulatory molecule which coordinates cellular responses required for differentiation, growth and development, probably by restricting polar cell proliferation in lateral organs and coordinating socket cell recruitment and differentiation at trichome sites. This is Small polypeptide DEVIL 18 from Arabidopsis thaliana (Mouse-ear cress).